The primary structure comprises 89 residues: Small ribosomal subunit protein uS15 (89 aa).

It belongs to the universal ribosomal protein uS15 family. As to quaternary structure, part of the 30S ribosomal subunit. Forms a bridge to the 50S subunit in the 70S ribosome, contacting the 23S rRNA.

One of the primary rRNA binding proteins, it binds directly to 16S rRNA where it helps nucleate assembly of the platform of the 30S subunit by binding and bridging several RNA helices of the 16S rRNA. Functionally, forms an intersubunit bridge (bridge B4) with the 23S rRNA of the 50S subunit in the ribosome. This Shewanella putrefaciens (strain CN-32 / ATCC BAA-453) protein is Small ribosomal subunit protein uS15.